The chain runs to 68 residues: Beta-defensin 1 (68 aa).

An N-terminal signal peptide occupies residues methionine 1–glycine 21. Residues glycine 22–serine 32 constitute a propeptide that is removed on maturation. 3 disulfide bridges follow: cysteine 37–cysteine 66, cysteine 44–cysteine 59, and cysteine 49–cysteine 67.

Belongs to the beta-defensin family. In terms of assembly, monomer. Homodimer.

It localises to the secreted. Its subcellular location is the membrane. In terms of biological role, has bactericidal activity. May act as a ligand for C-C chemokine receptor CCR6. Positively regulates the sperm motility and bactericidal activity in a CCR6-dependent manner. Binds to CCR6 and triggers Ca2+ mobilization in the sperm which is important for its motility. The sequence is that of Beta-defensin 1 (DEFB1) from Pan troglodytes (Chimpanzee).